The primary structure comprises 363 residues: 3-isopropylmalate dehydrogenase (363 aa).

79–92 contributes to the NAD(+) binding site; sequence GPKWEHLPPNDQPE. R100, R110, R139, and D228 together coordinate substrate. Positions 228, 252, and 256 each coordinate Mg(2+). 286-298 serves as a coordination point for NAD(+); sequence GSAPDIAGKNIAN.

It belongs to the isocitrate and isopropylmalate dehydrogenases family. LeuB type 1 subfamily. Homodimer. Mg(2+) serves as cofactor. The cofactor is Mn(2+).

The protein localises to the cytoplasm. The catalysed reaction is (2R,3S)-3-isopropylmalate + NAD(+) = 4-methyl-2-oxopentanoate + CO2 + NADH. The protein operates within amino-acid biosynthesis; L-leucine biosynthesis; L-leucine from 3-methyl-2-oxobutanoate: step 3/4. Catalyzes the oxidation of 3-carboxy-2-hydroxy-4-methylpentanoate (3-isopropylmalate) to 3-carboxy-4-methyl-2-oxopentanoate. The product decarboxylates to 4-methyl-2 oxopentanoate. This is 3-isopropylmalate dehydrogenase from Vibrio vulnificus (strain YJ016).